The sequence spans 146 residues: Protein translocase subunit SecE (146 aa).

The tract at residues 1 to 81 (MSDERYAASD…KVKKPKKSAD (81 aa)) is disordered. A compositionally biased stretch (gly residues) spans 10 to 20 (DGGGTEVGSGT). Residues 45-54 (RAANASNTGA) show a composition bias toward polar residues. A compositionally biased stretch (basic and acidic residues) spans 69 to 81 (KEGKVKKPKKSAD). A helical membrane pass occupies residues 118 to 138 (VVLAFLAFMVALVGLADFGLA).

It belongs to the SecE/SEC61-gamma family. Component of the Sec protein translocase complex. Heterotrimer consisting of SecY, SecE and SecG subunits. The heterotrimers can form oligomers, although 1 heterotrimer is thought to be able to translocate proteins. Interacts with the ribosome. Interacts with SecDF, and other proteins may be involved. Interacts with SecA.

It is found in the cell membrane. In terms of biological role, essential subunit of the Sec protein translocation channel SecYEG. Clamps together the 2 halves of SecY. May contact the channel plug during translocation. The chain is Protein translocase subunit SecE from Mycobacterium leprae (strain TN).